Consider the following 372-residue polypeptide: Glycerol-3-phosphate dehydrogenase [NAD(+)] (372 aa).

The span at 1 to 16 (MAPSELNCTHQNQHSS) shows a compositional bias: polar residues. The interval 1-23 (MAPSELNCTHQNQHSSGYDGPRS) is disordered. NAD(+) is bound by residues 29-34 (GSGNWG), Phe60, Phe117, Lys140, and Ala173. Position 140 (Lys140) interacts with substrate. Lys225 functions as the Proton acceptor in the catalytic mechanism. Residues Arg289, Lys318, and Gln320 each contribute to the NAD(+) site. Position 289–290 (289–290 (RN)) interacts with substrate.

Belongs to the NAD-dependent glycerol-3-phosphate dehydrogenase family.

It carries out the reaction sn-glycerol 3-phosphate + NAD(+) = dihydroxyacetone phosphate + NADH + H(+). This Cuphea lanceolata (Cigar flower) protein is Glycerol-3-phosphate dehydrogenase [NAD(+)] (GPDH).